A 200-amino-acid chain; its full sequence is 3-isopropylmalate dehydratase small subunit (200 aa).

Belongs to the LeuD family. LeuD type 1 subfamily. Heterodimer of LeuC and LeuD.

It catalyses the reaction (2R,3S)-3-isopropylmalate = (2S)-2-isopropylmalate. The protein operates within amino-acid biosynthesis; L-leucine biosynthesis; L-leucine from 3-methyl-2-oxobutanoate: step 2/4. Functionally, catalyzes the isomerization between 2-isopropylmalate and 3-isopropylmalate, via the formation of 2-isopropylmaleate. This Pseudarthrobacter chlorophenolicus (strain ATCC 700700 / DSM 12829 / CIP 107037 / JCM 12360 / KCTC 9906 / NCIMB 13794 / A6) (Arthrobacter chlorophenolicus) protein is 3-isopropylmalate dehydratase small subunit.